Here is a 354-residue protein sequence, read N- to C-terminus: Biotin synthase (354 aa).

One can recognise a Radical SAM core domain in the interval 41-265; sequence NEVQISRLLS…IMPHSRVRLS (225 aa). [4Fe-4S] cluster-binding residues include cysteine 56, cysteine 60, and cysteine 63. The [2Fe-2S] cluster site is built by cysteine 100, cysteine 131, cysteine 191, and arginine 263.

Belongs to the radical SAM superfamily. Biotin synthase family. In terms of assembly, homodimer. Requires [4Fe-4S] cluster as cofactor. [2Fe-2S] cluster serves as cofactor.

It catalyses the reaction (4R,5S)-dethiobiotin + (sulfur carrier)-SH + 2 reduced [2Fe-2S]-[ferredoxin] + 2 S-adenosyl-L-methionine = (sulfur carrier)-H + biotin + 2 5'-deoxyadenosine + 2 L-methionine + 2 oxidized [2Fe-2S]-[ferredoxin]. The protein operates within cofactor biosynthesis; biotin biosynthesis; biotin from 7,8-diaminononanoate: step 2/2. Its function is as follows. Catalyzes the conversion of dethiobiotin (DTB) to biotin by the insertion of a sulfur atom into dethiobiotin via a radical-based mechanism. The sequence is that of Biotin synthase from Shewanella sediminis (strain HAW-EB3).